A 113-amino-acid polypeptide reads, in one-letter code: Small ribosomal subunit protein bS18 (113 aa).

The interval 1–41 (MSEEKIVNTEAAPEAVAERPARAERSERPERPAKGPFGKKR) is disordered. The span at 16–33 (VAERPARAERSERPERPA) shows a compositional bias: basic and acidic residues.

The protein belongs to the bacterial ribosomal protein bS18 family. Part of the 30S ribosomal subunit. Forms a tight heterodimer with protein bS6.

Functionally, binds as a heterodimer with protein bS6 to the central domain of the 16S rRNA, where it helps stabilize the platform of the 30S subunit. The sequence is that of Small ribosomal subunit protein bS18 from Elusimicrobium minutum (strain Pei191).